We begin with the raw amino-acid sequence, 474 residues long: Synaptotagmin-17 (474 aa).

The segment at 54–112 (PAQTPPWLVSNRSEDKEGDSDNTTSEPPATPQDTSPDRRRSSSDTSRSTYSLTRRISSL) is disordered. The span at 96–112 (SDTSRSTYSLTRRISSL) shows a compositional bias: low complexity. 2 consecutive C2 domains span residues 184–310 (QLGM…HWWK) and 321–455 (ELGE…EQWH).

It belongs to the synaptotagmin family.

The protein localises to the membrane. Its function is as follows. May play a role in dendrite formation by melanocytes. This is Synaptotagmin-17 (syt17) from Xenopus tropicalis (Western clawed frog).